We begin with the raw amino-acid sequence, 122 residues long: HetP-like commitment protein Alr3234 (122 aa).

This sequence belongs to the HetP family. As to quaternary structure, in bacterial two-hybrid assays interacts robustly with itself, Asl1930, Alr2902 and HetR and weakly with HetP.

In terms of biological role, delays heterocyst differentiation and commitment when nitrogen is limiting. Interplay between the 4 HetP paralogs controls the timing of commitment to heterocyst formation and its duration. Epistatic analysis show that the 3 paralogs act upstream of hetP to delay commitment (asl1930, alr3234) or inhibit development (alr2902). Asl1930 and Alr3234 must also attenuate the activity of Alr2902. Ectopic expression does not complement a hetP deletion. This Nostoc sp. (strain PCC 7120 / SAG 25.82 / UTEX 2576) protein is HetP-like commitment protein Alr3234.